Reading from the N-terminus, the 110-residue chain is Large ribosomal subunit protein uL22 (110 aa).

It belongs to the universal ribosomal protein uL22 family. Part of the 50S ribosomal subunit.

Its function is as follows. This protein binds specifically to 23S rRNA; its binding is stimulated by other ribosomal proteins, e.g. L4, L17, and L20. It is important during the early stages of 50S assembly. It makes multiple contacts with different domains of the 23S rRNA in the assembled 50S subunit and ribosome. The globular domain of the protein is located near the polypeptide exit tunnel on the outside of the subunit, while an extended beta-hairpin is found that lines the wall of the exit tunnel in the center of the 70S ribosome. The polypeptide is Large ribosomal subunit protein uL22 (Verminephrobacter eiseniae (strain EF01-2)).